Consider the following 258-residue polypeptide: Imidazole glycerol phosphate synthase subunit HisF (258 aa).

Residues Asp-11 and Asp-130 contribute to the active site.

The protein belongs to the HisA/HisF family. In terms of assembly, heterodimer of HisH and HisF.

The protein resides in the cytoplasm. It catalyses the reaction 5-[(5-phospho-1-deoxy-D-ribulos-1-ylimino)methylamino]-1-(5-phospho-beta-D-ribosyl)imidazole-4-carboxamide + L-glutamine = D-erythro-1-(imidazol-4-yl)glycerol 3-phosphate + 5-amino-1-(5-phospho-beta-D-ribosyl)imidazole-4-carboxamide + L-glutamate + H(+). It functions in the pathway amino-acid biosynthesis; L-histidine biosynthesis; L-histidine from 5-phospho-alpha-D-ribose 1-diphosphate: step 5/9. Its function is as follows. IGPS catalyzes the conversion of PRFAR and glutamine to IGP, AICAR and glutamate. The HisF subunit catalyzes the cyclization activity that produces IGP and AICAR from PRFAR using the ammonia provided by the HisH subunit. The polypeptide is Imidazole glycerol phosphate synthase subunit HisF (Nitrobacter winogradskyi (strain ATCC 25391 / DSM 10237 / CIP 104748 / NCIMB 11846 / Nb-255)).